The primary structure comprises 423 residues: Kynureninase (423 aa).

Pyridoxal 5'-phosphate contacts are provided by residues Leu105, Ser106, 133–136 (FPSD), Asp218, His221, and Tyr243. Residue Lys244 is modified to N6-(pyridoxal phosphate)lysine. 2 residues coordinate pyridoxal 5'-phosphate: Trp273 and Asn301.

Belongs to the kynureninase family. As to quaternary structure, homodimer. It depends on pyridoxal 5'-phosphate as a cofactor.

It catalyses the reaction L-kynurenine + H2O = anthranilate + L-alanine + H(+). The enzyme catalyses 3-hydroxy-L-kynurenine + H2O = 3-hydroxyanthranilate + L-alanine + H(+). The protein operates within amino-acid degradation; L-kynurenine degradation; L-alanine and anthranilate from L-kynurenine: step 1/1. It participates in cofactor biosynthesis; NAD(+) biosynthesis; quinolinate from L-kynurenine: step 2/3. In terms of biological role, catalyzes the cleavage of L-kynurenine (L-Kyn) and L-3-hydroxykynurenine (L-3OHKyn) into anthranilic acid (AA) and 3-hydroxyanthranilic acid (3-OHAA), respectively. The polypeptide is Kynureninase (Xanthomonas euvesicatoria pv. vesicatoria (strain 85-10) (Xanthomonas campestris pv. vesicatoria)).